Here is a 346-residue protein sequence, read N- to C-terminus: Methionine import ATP-binding protein MetN (346 aa).

In terms of domain architecture, ABC transporter spans 2–243 (VRFEGISKTY…PKHPITQSFL (242 aa)). 40–47 (GRSGAGKS) serves as a coordination point for ATP.

This sequence belongs to the ABC transporter superfamily. Methionine importer (TC 3.A.1.24) family. As to quaternary structure, the complex is composed of two ATP-binding proteins (MetN), two transmembrane proteins (MetI) and a solute-binding protein (MetQ).

It localises to the cell inner membrane. It carries out the reaction L-methionine(out) + ATP + H2O = L-methionine(in) + ADP + phosphate + H(+). The enzyme catalyses D-methionine(out) + ATP + H2O = D-methionine(in) + ADP + phosphate + H(+). Functionally, part of the ABC transporter complex MetNIQ involved in methionine import. Responsible for energy coupling to the transport system. The polypeptide is Methionine import ATP-binding protein MetN (Bradyrhizobium diazoefficiens (strain JCM 10833 / BCRC 13528 / IAM 13628 / NBRC 14792 / USDA 110)).